The primary structure comprises 374 residues: Queuine tRNA-ribosyltransferase (374 aa).

Aspartate 89 serves as the catalytic Proton acceptor. Substrate is bound by residues 89–93, aspartate 143, glutamine 187, and glycine 214; that span reads DSGGF. The interval 245–251 is RNA binding; it reads GVGKPED. Aspartate 264 functions as the Nucleophile in the catalytic mechanism. The RNA binding; important for wobble base 34 recognition stretch occupies residues 269-273; it reads TRNAR. Residues cysteine 302, cysteine 304, cysteine 307, and histidine 333 each contribute to the Zn(2+) site.

Belongs to the queuine tRNA-ribosyltransferase family. Homodimer. Within each dimer, one monomer is responsible for RNA recognition and catalysis, while the other monomer binds to the replacement base PreQ1. It depends on Zn(2+) as a cofactor.

It catalyses the reaction 7-aminomethyl-7-carbaguanine + guanosine(34) in tRNA = 7-aminomethyl-7-carbaguanosine(34) in tRNA + guanine. It participates in tRNA modification; tRNA-queuosine biosynthesis. Functionally, catalyzes the base-exchange of a guanine (G) residue with the queuine precursor 7-aminomethyl-7-deazaguanine (PreQ1) at position 34 (anticodon wobble position) in tRNAs with GU(N) anticodons (tRNA-Asp, -Asn, -His and -Tyr). Catalysis occurs through a double-displacement mechanism. The nucleophile active site attacks the C1' of nucleotide 34 to detach the guanine base from the RNA, forming a covalent enzyme-RNA intermediate. The proton acceptor active site deprotonates the incoming PreQ1, allowing a nucleophilic attack on the C1' of the ribose to form the product. After dissociation, two additional enzymatic reactions on the tRNA convert PreQ1 to queuine (Q), resulting in the hypermodified nucleoside queuosine (7-(((4,5-cis-dihydroxy-2-cyclopenten-1-yl)amino)methyl)-7-deazaguanosine). This Serratia proteamaculans (strain 568) protein is Queuine tRNA-ribosyltransferase.